Here is a 152-residue protein sequence, read N- to C-terminus: Protein SprT-like (152 aa).

Residues 9-149 form the SprT-like domain; that stretch reads LQKLTETISL…CGKCNGKLKE (141 aa). Zn(2+) is bound at residue H70. E71 is a catalytic residue. Zn(2+) is bound at residue H74.

This sequence belongs to the SprT family. It depends on Zn(2+) as a cofactor.

The protein localises to the cytoplasm. In Staphylococcus saprophyticus subsp. saprophyticus (strain ATCC 15305 / DSM 20229 / NCIMB 8711 / NCTC 7292 / S-41), this protein is Protein SprT-like.